A 290-amino-acid chain; its full sequence is Nucleotide-binding protein XF_1405 (290 aa).

13 to 20 is an ATP binding site; that stretch reads GLSGSGKS. Residue 65–68 participates in GTP binding; sequence DIRS.

It belongs to the RapZ-like family.

Functionally, displays ATPase and GTPase activities. This chain is Nucleotide-binding protein XF_1405, found in Xylella fastidiosa (strain 9a5c).